Consider the following 521-residue polypeptide: Probable protein kinase UbiB (521 aa).

In terms of domain architecture, Protein kinase spans 119-497 (SFDRQPVASA…QKRTNRLLQS (379 aa)). Residues 125–133 (VASASIAQV) and Lys-151 each bind ATP. Asp-286 serves as the catalytic Proton acceptor. The chain crosses the membrane as a helical span at residues 496 to 516 (QSLIYGGLGFVLGLLVMQLFV).

It belongs to the ABC1 family. UbiB subfamily.

It localises to the cell inner membrane. Its pathway is cofactor biosynthesis; ubiquinone biosynthesis [regulation]. Its function is as follows. Is probably a protein kinase regulator of UbiI activity which is involved in aerobic coenzyme Q (ubiquinone) biosynthesis. This Acidovorax sp. (strain JS42) protein is Probable protein kinase UbiB.